We begin with the raw amino-acid sequence, 119 residues long: Mitochondrial coiled-coil domain protein 1 (119 aa).

A mitochondrion-targeting transit peptide spans 1–24 (MVLPLPWLSRYHFLRLLLPSWSLA). The interval 25–65 (PQGSHGCCSQNPKASMEEQTSSRGNGKMTSPPRGPGTHRTA) is disordered. The segment covering 31 to 52 (CCSQNPKASMEEQTSSRGNGKM) has biased composition (polar residues). Positions 62-116 (HRTAELARAEELLEQQLELYQALLEGQEGAWEAQALVLKIQKLKEQMRRHQESLG) form a coiled coil.

As to expression, widely expressed. Expressed in adult and fetal liver, kidney and lung. Expressed in fetal brain. Weakly expressed in fetal spleen.

Its subcellular location is the mitochondrion. This is Mitochondrial coiled-coil domain protein 1 (MCCD1) from Homo sapiens (Human).